The primary structure comprises 206 residues: Interleukin-24 (206 aa).

A signal peptide spans 1–51; sequence MNFQQRLQSLWTLARPFCPPLLATASQMQMVVLPCLGFTLLLWSQVSGAQG. Residues cysteine 59 and cysteine 106 are joined by a disulfide bond. Residues asparagine 85 and asparagine 99 are each glycosylated (N-linked (GlcNAc...) asparagine). Lysine 122 is covalently cross-linked (Glycyl lysine isopeptide (Lys-Gly) (interchain with G-Cter in ubiquitin)). Residue asparagine 126 is glycosylated (N-linked (GlcNAc...) asparagine).

This sequence belongs to the IL-10 family. In terms of processing, glycosylated. Post-translationally, ubiquitination at Lys-122 promotes proteasomal degradation. Up-regulated in melanoma cells induced to terminally differentiate.

It localises to the secreted. Multifunctional cytokine mainly produced by T-cells that plays a regulatory role in immune response, tissue homeostasis, host defense, and oncogenesis. Possesses antiviral functions and induces the type I interferon response during influenza infection. Signals through two receptor complexes IL20RA/IL20RB or IL20RB/IL22RA1. In turn, stimulates the JAK1-STAT3 and MAPK pathways and promotes the secretion of pro-inflammatory mediators including IL8 and MMP1. Intracellularly, maintains endoplasmic reticulum homeostasis by restricting the eIF2alpha-CHOP pathway-mediated stress signal. In addition, acts as a quality control mechanism for the ubiquitin proteasome system by alerting the cell to proteasome dysfunction through activation of PKR/EIF2AK2. This Homo sapiens (Human) protein is Interleukin-24 (IL24).